A 196-amino-acid polypeptide reads, in one-letter code: Corticoliberin (196 aa).

The signal sequence occupies residues 1–24 (MRLPLLVSAGVLLVALLPCPPCRA). Residues 25 to 153 (LLSRGPVPGA…HQEAPERERR (129 aa)) constitute a propeptide that is removed on maturation. 3 disordered regions span residues 32–61 (PGAR…QPQA), 85–105 (APLS…PSPE), and 136–158 (GARN…EEPP). Low complexity-rich tracts occupy residues 38-47 (PQHPQPLDFF) and 85-104 (APLS…RPSP). The span at 146–156 (EAPERERRSEE) shows a compositional bias: basic and acidic residues. Ile-194 is subject to Isoleucine amide.

It belongs to the sauvagine/corticotropin-releasing factor/urotensin I family. In terms of assembly, interacts (via C-terminus) with CRFR1 (via N-terminal extracellular domain). Produced by the hypothalamus and placenta.

It localises to the secreted. Its function is as follows. Hormone regulating the release of corticotropin from pituitary gland. Induces NLRP6 in intestinal epithelial cells, hence may influence gut microbiota profile. The sequence is that of Corticoliberin (CRH) from Homo sapiens (Human).